The primary structure comprises 120 residues: MSEFKLGDIFGCEAVKNFGAALRKALRIGDDYASLVELEYVETKEQFEEVIKKFLRRYETIARRGYKGKELSRLSEKDLEELMSLVDKYDVKPIRAALISYALVKSEREDEATLKSEEVV.

This is an uncharacterized protein from Archaeoglobus fulgidus (strain ATCC 49558 / DSM 4304 / JCM 9628 / NBRC 100126 / VC-16).